The primary structure comprises 173 residues: Disulfide bond formation protein B (173 aa).

The Cytoplasmic portion of the chain corresponds to 1 to 14 (MIEFLRRIAAHRLA). The helical transmembrane segment at 15-31 (WGLLAASALFLELSALF) threads the bilayer. Over 32–49 (FQYVLGLHPCVMCVYERL) the chain is Periplasmic. C41 and C44 are oxidised to a cystine. A helical transmembrane segment spans residues 50 to 65 (AILGVLSAGLLGMVAP). Over 66 to 72 (EKWYLRW) the chain is Cytoplasmic. Residues 73 to 90 (SALLLWGYSAFRGLQLAL) traverse the membrane as a helical segment. The Periplasmic portion of the chain corresponds to 91–145 (KHVDYQMNPSPFNVCSPFADFPSWAPLDQWLPWLFFPDGDCSEISWQFLSFSMPQ). A disulfide bridge links C105 with C131. The helical transmembrane segment at 146-164 (WLVAIFAAYLLVFVVVTIG) threads the bilayer. The Cytoplasmic portion of the chain corresponds to 165–173 (NLVKGRCCS).

It belongs to the DsbB family.

It localises to the cell inner membrane. Required for disulfide bond formation in some periplasmic proteins. Acts by oxidizing the DsbA protein. The protein is Disulfide bond formation protein B of Aeromonas salmonicida (strain A449).